A 131-amino-acid chain; its full sequence is Small ribosomal subunit protein uS11 (131 aa).

Belongs to the universal ribosomal protein uS11 family. As to quaternary structure, part of the 30S ribosomal subunit. Interacts with proteins S7 and S18. Binds to IF-3.

Located on the platform of the 30S subunit, it bridges several disparate RNA helices of the 16S rRNA. Forms part of the Shine-Dalgarno cleft in the 70S ribosome. This chain is Small ribosomal subunit protein uS11, found in Granulibacter bethesdensis (strain ATCC BAA-1260 / CGDNIH1).